The chain runs to 350 residues: N-acetyl-gamma-glutamyl-phosphate reductase (350 aa).

Residue cysteine 153 is part of the active site.

Belongs to the NAGSA dehydrogenase family. Type 1 subfamily.

It is found in the cytoplasm. The enzyme catalyses N-acetyl-L-glutamate 5-semialdehyde + phosphate + NADP(+) = N-acetyl-L-glutamyl 5-phosphate + NADPH + H(+). It functions in the pathway amino-acid biosynthesis; L-arginine biosynthesis; N(2)-acetyl-L-ornithine from L-glutamate: step 3/4. Functionally, catalyzes the NADPH-dependent reduction of N-acetyl-5-glutamyl phosphate to yield N-acetyl-L-glutamate 5-semialdehyde. This chain is N-acetyl-gamma-glutamyl-phosphate reductase, found in Gloeobacter violaceus (strain ATCC 29082 / PCC 7421).